A 163-amino-acid polypeptide reads, in one-letter code: uncharacterized protein (163 aa).

Residues 142-163 (PQIVISEHNNTKETSPSRQFEH) are disordered. Residues 153–163 (KETSPSRQFEH) are compositionally biased toward polar residues.

This sequence belongs to the RCAN family.

Functionally, inhibits calcineurin-dependent transcriptional responses by binding to the catalytic domain of calcineurin. This is an uncharacterized protein from Schizosaccharomyces pombe (strain 972 / ATCC 24843) (Fission yeast).